A 336-amino-acid polypeptide reads, in one-letter code: Pyridoxal 5'-phosphate synthase subunit PdxS (336 aa).

Aspartate 33 provides a ligand contact to D-ribose 5-phosphate. The Schiff-base intermediate with D-ribose 5-phosphate role is filled by lysine 90. Glycine 162 is a D-ribose 5-phosphate binding site. Position 174 (arginine 174) interacts with D-glyceraldehyde 3-phosphate. D-ribose 5-phosphate is bound by residues glycine 260 and 281–282 (GS).

It belongs to the PdxS/SNZ family. In terms of assembly, in the presence of PdxT, forms a dodecamer of heterodimers.

The enzyme catalyses aldehydo-D-ribose 5-phosphate + D-glyceraldehyde 3-phosphate + L-glutamine = pyridoxal 5'-phosphate + L-glutamate + phosphate + 3 H2O + H(+). The protein operates within cofactor biosynthesis; pyridoxal 5'-phosphate biosynthesis. Catalyzes the formation of pyridoxal 5'-phosphate from ribose 5-phosphate (RBP), glyceraldehyde 3-phosphate (G3P) and ammonia. The ammonia is provided by the PdxT subunit. Can also use ribulose 5-phosphate and dihydroxyacetone phosphate as substrates, resulting from enzyme-catalyzed isomerization of RBP and G3P, respectively. This chain is Pyridoxal 5'-phosphate synthase subunit PdxS, found in Picrophilus torridus (strain ATCC 700027 / DSM 9790 / JCM 10055 / NBRC 100828 / KAW 2/3).